Reading from the N-terminus, the 209-residue chain is MSRNGLGPVAGVDEAGRGACCGPISIAACILPDKPIQELAALTDSKKLSASTREKLMPLIKKHALAWSVIVISAQDIDRFGIQHANISGMRRAVAALGTQPGYVLTDAMKVPGFTVPYLPIIGGDASARCIAAASVLAKQTRDDIMTDMANDYPHYGLEIHKGYSTKIHMDAVRHHGASPEHRYSYANVAKAHQEWLHAADNDTTEGGA.

An RNase H type-2 domain is found at 7 to 198 (GPVAGVDEAG…VAKAHQEWLH (192 aa)). Residues Asp-13, Glu-14, and Asp-107 each coordinate a divalent metal cation.

This sequence belongs to the RNase HII family. Mn(2+) serves as cofactor. The cofactor is Mg(2+).

Its subcellular location is the cytoplasm. It carries out the reaction Endonucleolytic cleavage to 5'-phosphomonoester.. Endonuclease that specifically degrades the RNA of RNA-DNA hybrids. The chain is Ribonuclease HII from Corynebacterium glutamicum (strain ATCC 13032 / DSM 20300 / JCM 1318 / BCRC 11384 / CCUG 27702 / LMG 3730 / NBRC 12168 / NCIMB 10025 / NRRL B-2784 / 534).